The following is a 121-amino-acid chain: Ribosome-binding factor A (121 aa).

It belongs to the RbfA family. Monomer. Binds 30S ribosomal subunits, but not 50S ribosomal subunits or 70S ribosomes.

It is found in the cytoplasm. In terms of biological role, one of several proteins that assist in the late maturation steps of the functional core of the 30S ribosomal subunit. Associates with free 30S ribosomal subunits (but not with 30S subunits that are part of 70S ribosomes or polysomes). Required for efficient processing of 16S rRNA. May interact with the 5'-terminal helix region of 16S rRNA. In Clostridium kluyveri (strain NBRC 12016), this protein is Ribosome-binding factor A.